The primary structure comprises 313 residues: MGNELQHRTVLLDEAVESLVTRPDGIYVDGTFGRGGHSRAVLARLGPAGRLIAFDKDPRAIETAQGIGDARFSIVHDSFASMRDALAARGIEKVSGVLLDLGVSSPQVDDPARGFSFRADGPLDMRMDPTRGESAAEWLARASLQELTEVIRDYGEERFAFQIAKALVARRAESDRLGPLDSTGELAQIVGHVVKTREKGKDPATRTFQAIRIHVNQELADLQVVLDAALSLLEQGGRLVVISFHSLEDRIVKRFMQAHASAPAVDRRLPIRAVDLPSPPLKIIGRQFPSEAEVAANPRARSAVMRIAERLTP.

S-adenosyl-L-methionine-binding positions include 35–37 (GGH), aspartate 55, phenylalanine 79, aspartate 100, and glutamine 107.

Belongs to the methyltransferase superfamily. RsmH family.

The protein localises to the cytoplasm. It catalyses the reaction cytidine(1402) in 16S rRNA + S-adenosyl-L-methionine = N(4)-methylcytidine(1402) in 16S rRNA + S-adenosyl-L-homocysteine + H(+). Functionally, specifically methylates the N4 position of cytidine in position 1402 (C1402) of 16S rRNA. This is Ribosomal RNA small subunit methyltransferase H from Burkholderia multivorans (strain ATCC 17616 / 249).